A 104-amino-acid polypeptide reads, in one-letter code: Precursor of CEP11 (104 aa).

The first 27 residues, 1 to 27 (MAKTRRVIYLFLTIVLLFCELIDEAQG), serve as a signal peptide directing secretion. A propeptide spanning residues 28 to 85 (SRFRCHHSEDYSCKKRSSHHHHHHHHHQQQQHHHKDTPPEELQGSIKTRRSKDIYGLN) is cleaved from the precursor. The interval 37–104 (DYSCKKRSSH…SPGVGHLIKT (68 aa)) is disordered. A compositionally biased stretch (basic residues) spans 41-62 (KKRSSHHHHHHHHHQQQQHHHK). Hydroxyproline is present on residues P92 and P96. The propeptide occupies 101 to 104 (LIKT).

Belongs to the C-terminally encoded plant signaling peptide (CEP) family. In terms of assembly, interacts with CEP receptors (e.g. CEPR1 and CEPR2). The mature small signaling peptide is generated by proteolytic processing of the longer precursor. As to expression, expressed in lateral root primordia and in lateral roots excluding the meristem region.

Its subcellular location is the secreted. It localises to the extracellular space. The protein localises to the apoplast. Functionally, extracellular signaling peptide that may regulate primary root growth rate and systemic nitrogen (N)-demand signaling. Mediates up-regulation of genes involved in N uptake and assimilation pathways. The chain is Precursor of CEP11 from Arabidopsis thaliana (Mouse-ear cress).